A 330-amino-acid chain; its full sequence is D-cysteine desulfhydrase (330 aa).

Lys52 carries the N6-(pyridoxal phosphate)lysine modification.

This sequence belongs to the ACC deaminase/D-cysteine desulfhydrase family. In terms of assembly, homodimer. Pyridoxal 5'-phosphate is required as a cofactor.

The catalysed reaction is D-cysteine + H2O = hydrogen sulfide + pyruvate + NH4(+) + H(+). Catalyzes the alpha,beta-elimination reaction of D-cysteine and of several D-cysteine derivatives. It could be a defense mechanism against D-cysteine. This is D-cysteine desulfhydrase from Yersinia pestis.